The following is a 155-amino-acid chain: Ribosomal RNA large subunit methyltransferase H (155 aa).

Residues G104 and 123–128 (FGNITL) contribute to the S-adenosyl-L-methionine site.

It belongs to the RNA methyltransferase RlmH family. Homodimer.

It localises to the cytoplasm. It catalyses the reaction pseudouridine(1915) in 23S rRNA + S-adenosyl-L-methionine = N(3)-methylpseudouridine(1915) in 23S rRNA + S-adenosyl-L-homocysteine + H(+). Its function is as follows. Specifically methylates the pseudouridine at position 1915 (m3Psi1915) in 23S rRNA. This Mesoplasma florum (strain ATCC 33453 / NBRC 100688 / NCTC 11704 / L1) (Acholeplasma florum) protein is Ribosomal RNA large subunit methyltransferase H.